A 357-amino-acid chain; its full sequence is Mating-type protein MAT-1 (357 aa).

Positions 53-108 (RAKRPLNAFMAFRTYYLKLFPDTQQKNASGFLTQLWGGDPHRNKWALIAKVYSFLR) form a DNA-binding region, alpha box.

This sequence belongs to the MATALPHA1 family.

It is found in the nucleus. Its function is as follows. Mating type proteins are sequence specific DNA-binding proteins that act as master switches in fungal differentiation by controlling gene expression in a cell type-specific fashion. Transcriptional activator that induces the transcription of alpha-specific genes. This chain is Mating-type protein MAT-1 (MAT1), found in Fusarium oxysporum (Fusarium vascular wilt).